The chain runs to 76 residues: Large ribosomal subunit protein eL20 (76 aa).

This sequence belongs to the eukaryotic ribosomal protein eL20 family. Part of the 50S ribosomal subunit. Binds 23S rRNA.

The polypeptide is Large ribosomal subunit protein eL20 (Methanococcus maripaludis (strain C6 / ATCC BAA-1332)).